The sequence spans 279 residues: Oxygen-dependent coproporphyrinogen-III oxidase (279 aa).

Serine 102 provides a ligand contact to substrate. The a divalent metal cation site is built by histidine 106 and histidine 116. The active-site Proton donor is histidine 116. Asparagine 118–arginine 120 is a binding site for substrate. A divalent metal cation-binding residues include histidine 149 and histidine 179. The segment at tyrosine 244–asparagine 279 is important for dimerization.

It belongs to the aerobic coproporphyrinogen-III oxidase family. In terms of assembly, homodimer. A divalent metal cation serves as cofactor.

The protein resides in the cytoplasm. The catalysed reaction is coproporphyrinogen III + O2 + 2 H(+) = protoporphyrinogen IX + 2 CO2 + 2 H2O. Its pathway is porphyrin-containing compound metabolism; protoporphyrin-IX biosynthesis; protoporphyrinogen-IX from coproporphyrinogen-III (O2 route): step 1/1. Involved in the heme biosynthesis. Catalyzes the aerobic oxidative decarboxylation of propionate groups of rings A and B of coproporphyrinogen-III to yield the vinyl groups in protoporphyrinogen-IX. The protein is Oxygen-dependent coproporphyrinogen-III oxidase of Rickettsia africae (strain ESF-5).